A 760-amino-acid chain; its full sequence is H(+)/Cl(-) exchange transporter 4 (760 aa).

Topologically, residues 1-67 (MVNAGAMSGS…WEFIKSLLDA (67 aa)) are cytoplasmic. Positions 14–63 (MDFLDEPFPDVGTYEDFHTIDWLREKSRDTDRHRKITSKSKESIWEFIKS) are required for localization in the endoplasmic reticulum. The next 2 helical transmembrane spans lie at 68–105 (WSGW…VCLS) and 151–174 (LNYL…VRVF). The Selectivity filter part_1 motif lies at 180 to 184 (GSGIP). A chloride-binding site is contributed by Ser181. An intramembrane region (helical) is located at residues 183–190 (IPEIKTIL). 2 helical membrane passes run 200-218 (GKWT…VSSG) and 224-243 (EGPL…SLFS). Residues 222 to 226 (GKEGP) carry the Selectivity filter part_2 motif. 2 intramembrane regions (helical) span residues 255-267 (VLSA…VSVA) and 271-279 (PIGGVLFSL). A run of 5 helical transmembrane segments spans residues 291 to 309 (LWRS…RSIN), 333 to 358 (FPFI…AWCR), 365 to 385 (LGKY…IIAY), 442 to 462 (MWQL…TFGM), and 467 to 486 (GLFI…VGIG). Positions 467-471 (GLFIP) match the Selectivity filter part_3 motif. Phe469 lines the chloride pocket. 2 consecutive intramembrane regions (helical) follow at residues 514–528 (GLYA…LGGV) and 532–543 (TVSLVVIMFELT). Positions 544 to 547 (GGLE) form an intramembrane region, note=Loop between two helices. Residues 548–566 (YIVPLMAAAVTSKWVADAF) form a helical membrane-spanning segment. The Cytoplasmic portion of the chain corresponds to 567–760 (GKEGIYEAHI…NQDPESIMFN (194 aa)). Residue Tyr572 participates in chloride binding. Residues 600–666 (MRPRRGEPPL…AIKNARQRQE (67 aa)) form the CBS 1 domain. ATP is bound by residues Ser610 and 631-633 (YNG). A required for localization in the endoplasmic reticulum region spans residues 667–696 (GIVSNSIMYFTEEPPELPANSPHPLKLRRI). A CBS 2 domain is found at 697–755 (LNLSPFTVTDHTPMETVVDIFRKLGLRQCLVTRSGRLLGIITKKDVLRHMAQMANQDPE). 738-741 (TKKD) lines the ATP pocket.

It belongs to the chloride channel (TC 2.A.49) family. ClC-4/CLCN4 subfamily. Monomer. Forms heterodimers with CLCN3. As to expression, abundant in skeletal muscle and also detectable in brain and heart.

It localises to the early endosome membrane. Its subcellular location is the late endosome membrane. The protein localises to the endoplasmic reticulum membrane. The protein resides in the lysosome membrane. It is found in the recycling endosome membrane. Functionally, strongly outwardly rectifying, electrogenic H(+)/Cl(-)exchanger which mediates the exchange of chloride ions against protons. The CLC channel family contains both chloride channels and proton-coupled anion transporters that exchange chloride or another anion for protons. The presence of conserved gating glutamate residues is typical for family members that function as antiporters. This Homo sapiens (Human) protein is H(+)/Cl(-) exchange transporter 4 (CLCN4).